The primary structure comprises 858 residues: Zinc finger protein ZXDC (858 aa).

Disordered regions lie at residues 1-127 (MDLP…APAG) and 151-174 (PGPA…STPG). Composition is skewed to low complexity over residues 23-35 (PLRR…GASP), 84-97 (GGAA…QEAE), and 151-171 (PGPA…SGPS). Serine 34 is subject to Phosphoserine. Phosphothreonine is present on threonine 172. 10 consecutive C2H2-type zinc fingers follow at residues 175-199 (YRCP…LLTH), 208-232 (FKCP…LQSH), 238-262 (FGCP…MKGH), 268-290 (FKCE…QRSH), 297-321 (YKCD…NRAH), 328-352 (FSCS…LRSH), 358-382 (FICD…RRKH), 388-412 (FTCP…SITH), 418-442 (FECP…SKKH), and 451-476 (SRCP…VRQH). The tract at residues 579-688 (DSPLVLGTAA…HGLPQSTLPS (110 aa)) is required for transcriptional activation. Lysine 660 participates in a covalent cross-link: Glycyl lysine isopeptide (Lys-Gly) (interchain with G-Cter in SUMO). 3 disordered regions span residues 660-696 (KVEP…HGAQ), 726-756 (KEKK…SPPH), and 837-858 (GGPA…QDLQ). Serine 665 is modified (phosphoserine). The segment covering 675 to 687 (QEGSHGLPQSTLP) has biased composition (polar residues). Positions 781–858 (PAAGVQCGAQ…GSTINLQDLQ (78 aa)) are interaction with CIITA. Over residues 847-858 (FPGSTINLQDLQ) the composition is skewed to polar residues.

This sequence belongs to the ZXD family. As to quaternary structure, self-associates. Interacts with ZXDA and CIITA. In terms of processing, sumoylated at Lys-660 with SUMO1, SUMO2 and SUMO3; sumoylation enhances the activity of the transcriptional activation domain. Expressed at high levels in heart, kidney, liver and testis, at moderate levels in brain and stomach, and at low levels in lung, muscle, placenta, small intestine and spleen.

It is found in the nucleus. Functionally, cooperates with CIITA to promote transcription of MHC class I and MHC class II genes. This is Zinc finger protein ZXDC (ZXDC) from Homo sapiens (Human).